The sequence spans 313 residues: N-acetyl-gamma-glutamyl-phosphate reductase 2 (313 aa).

Cys-117 is a catalytic residue.

Belongs to the NAGSA dehydrogenase family. Type 2 subfamily.

It localises to the cytoplasm. The enzyme catalyses N-acetyl-L-glutamate 5-semialdehyde + phosphate + NADP(+) = N-acetyl-L-glutamyl 5-phosphate + NADPH + H(+). It participates in amino-acid biosynthesis; L-arginine biosynthesis; N(2)-acetyl-L-ornithine from L-glutamate: step 3/4. Functionally, catalyzes the NADPH-dependent reduction of N-acetyl-5-glutamyl phosphate to yield N-acetyl-L-glutamate 5-semialdehyde. This Pseudomonas putida (strain ATCC 47054 / DSM 6125 / CFBP 8728 / NCIMB 11950 / KT2440) protein is N-acetyl-gamma-glutamyl-phosphate reductase 2.